Here is a 329-residue protein sequence, read N- to C-terminus: Beta-ketoacyl-[acyl-carrier-protein] synthase III (329 aa).

Residues Cys-123 and His-256 contribute to the active site. The tract at residues 257-261 (QANVR) is ACP-binding. Asn-286 is a catalytic residue.

It belongs to the thiolase-like superfamily. FabH family. In terms of assembly, homodimer.

It localises to the cytoplasm. The catalysed reaction is malonyl-[ACP] + acetyl-CoA + H(+) = 3-oxobutanoyl-[ACP] + CO2 + CoA. The protein operates within lipid metabolism; fatty acid biosynthesis. Functionally, catalyzes the condensation reaction of fatty acid synthesis by the addition to an acyl acceptor of two carbons from malonyl-ACP. Catalyzes the first condensation reaction which initiates fatty acid synthesis and may therefore play a role in governing the total rate of fatty acid production. Possesses both acetoacetyl-ACP synthase and acetyl transacylase activities. Its substrate specificity determines the biosynthesis of branched-chain and/or straight-chain of fatty acids. This chain is Beta-ketoacyl-[acyl-carrier-protein] synthase III, found in Bordetella parapertussis (strain 12822 / ATCC BAA-587 / NCTC 13253).